An 89-amino-acid chain; its full sequence is Small ribosomal subunit protein uS15 (89 aa).

Belongs to the universal ribosomal protein uS15 family. As to quaternary structure, part of the 30S ribosomal subunit. Forms a bridge to the 50S subunit in the 70S ribosome, contacting the 23S rRNA.

Functionally, one of the primary rRNA binding proteins, it binds directly to 16S rRNA where it helps nucleate assembly of the platform of the 30S subunit by binding and bridging several RNA helices of the 16S rRNA. Forms an intersubunit bridge (bridge B4) with the 23S rRNA of the 50S subunit in the ribosome. The sequence is that of Small ribosomal subunit protein uS15 from Allorhizobium ampelinum (strain ATCC BAA-846 / DSM 112012 / S4) (Agrobacterium vitis (strain S4)).